The chain runs to 536 residues: CTP synthase (536 aa).

Positions 1–267 are amidoligase domain; sequence MSKFVFVTGG…CKETLRCLDL (267 aa). A CTP-binding site is contributed by Ser-13. Ser-13 is a binding site for UTP. Residues 14–19 and Asp-71 each bind ATP; that span reads SIGKGI. Residues Asp-71 and Glu-141 each contribute to the Mg(2+) site. CTP contacts are provided by residues 148-150, 188-193, and Lys-224; these read DIE and KTKPTQ. Residues 188–193 and Lys-224 contribute to the UTP site; that span reads KTKPTQ. Residues 292-534 form the Glutamine amidotransferase type-1 domain; it reads KVALVGKYIE…IKASREKLEQ (243 aa). Gly-354 contacts L-glutamine. The Nucleophile; for glutamine hydrolysis role is filled by Cys-381. Residues 382–385, Glu-405, and Arg-462 each bind L-glutamine; that span reads LGMQ. Active-site residues include His-507 and Glu-509.

This sequence belongs to the CTP synthase family. Homotetramer.

It catalyses the reaction UTP + L-glutamine + ATP + H2O = CTP + L-glutamate + ADP + phosphate + 2 H(+). The enzyme catalyses L-glutamine + H2O = L-glutamate + NH4(+). The catalysed reaction is UTP + NH4(+) + ATP = CTP + ADP + phosphate + 2 H(+). The protein operates within pyrimidine metabolism; CTP biosynthesis via de novo pathway; CTP from UDP: step 2/2. With respect to regulation, allosterically activated by GTP, when glutamine is the substrate; GTP has no effect on the reaction when ammonia is the substrate. The allosteric effector GTP functions by stabilizing the protein conformation that binds the tetrahedral intermediate(s) formed during glutamine hydrolysis. Inhibited by the product CTP, via allosteric rather than competitive inhibition. Its function is as follows. Catalyzes the ATP-dependent amination of UTP to CTP with either L-glutamine or ammonia as the source of nitrogen. Regulates intracellular CTP levels through interactions with the four ribonucleotide triphosphates. This is CTP synthase from Prochlorococcus marinus (strain MIT 9515).